The following is a 609-amino-acid chain: Arginine--tRNA ligase (609 aa).

A 'HIGH' region motif is present at residues 132-142 (ANPTSSLHVGH).

Belongs to the class-I aminoacyl-tRNA synthetase family. As to quaternary structure, monomer.

It is found in the cytoplasm. The enzyme catalyses tRNA(Arg) + L-arginine + ATP = L-arginyl-tRNA(Arg) + AMP + diphosphate. This is Arginine--tRNA ligase from Psychrobacter cryohalolentis (strain ATCC BAA-1226 / DSM 17306 / VKM B-2378 / K5).